The sequence spans 1431 residues: 1-phosphatidylinositol 4,5-bisphosphate phosphodiesterase beta egl-8 (1431 aa).

A PI-PLC X-box domain is found at 340–491; the sequence is MDMDQPLCHY…LRKKILIKNK (152 aa). His-355 is a catalytic residue. Ca(2+) contacts are provided by Asn-356, Glu-385, and Asp-387. Residue His-403 is part of the active site. Glu-437 lines the Ca(2+) pocket. Residues Lys-489 and Lys-491 each coordinate substrate. Disordered stretches follow at residues 510-601 and 632-692; these read KLDE…MVPD and RRQS…SGPS. Over residues 543–556 the composition is skewed to acidic residues; the sequence is EEVDDDTSDDDDDP. Composition is skewed to low complexity over residues 572-586, 652-661, and 668-692; these read NTTS…ARSS, SSSSPATPSI, and ATSS…SGPS. A PI-PLC Y-box domain is found at 758 to 874; sequence LSSLVNYTHP…GYLLKPDFLR (117 aa). Residues Ser-787 and Arg-814 each contribute to the substrate site. Positions 877-1002 constitute a C2 domain; that stretch reads DRTFDPFSES…SLRSDTNQSF (126 aa). Disordered regions lie at residues 1072–1119, 1150–1176, and 1188–1216; these read QPPR…VAVD, DLRK…SSIA, and NNRR…SASG. Polar residues predominate over residues 1074-1113; that stretch reads PRQNGSSADLLANNGQTGSARGDQTSSMASSTIRSPNEQP. Residues 1135–1166 are a coiled coil; the sequence is KAFAKLLKRFQKELDDLRKKHQKQRDSIQKQQ. Over residues 1150–1162 the composition is skewed to basic and acidic residues; the sequence is DLRKKHQKQRDSI. Residues 1191-1200 show a composition bias toward basic residues; it reads RSTKKEKGSR. Low complexity predominate over residues 1204-1216; the sequence is TASVSSGCGSASG. Coiled coils occupy residues 1288 to 1318 and 1368 to 1402; these read DEEE…KNQM and EKNL…QLEQ.

The cofactor is Ca(2+). Expressed in most or all neurons with high expression in the head and tail ganglia and low expression in the motor neurons of the ventral cord. Expressed in the intestine (at protein level). In males, expressed in vas deferens, spicule protractor muscles, diagonal muscles and a male-specific neuron.

The protein localises to the perikaryon. It localises to the cell projection. The protein resides in the axon. It is found in the synapse. Its subcellular location is the cell junction. The protein localises to the adherens junction. The catalysed reaction is a 1,2-diacyl-sn-glycero-3-phospho-(1D-myo-inositol-4,5-bisphosphate) + H2O = 1D-myo-inositol 1,4,5-trisphosphate + a 1,2-diacyl-sn-glycerol + H(+). Functionally, mediates the production of the second messenger molecules diacylglycerol (DAG) and inositol 1,4,5-trisphosphate (IP3) which plays an important role in the regulation of intracellular signaling cascades. Required in the nervous system to modulate neuronal activity. Facilitates synaptic transmission at neuromuscular junctions by regulating the release of acetylcholine from the motor neurons and thus affecting locomotion. Plays a role in efficient egg laying and defecation. Involved in axon regeneration after injury. Plays a role in male mating behavior by regulating spicule insertion and sperm transfer. By triggering Ca(2+) transient via IP3-mediated activation of IPR3 receptor itr-1 in ASH sensory neurons, regulates avoidance behavior in response to nose touch. By activating tpa-1 via DAG production, required for the expression of antimicrobial peptide nlp-29 in response to fungal infection. During embryogenesis, may play a role in epidermal morphogenesis together with plc-1. The chain is 1-phosphatidylinositol 4,5-bisphosphate phosphodiesterase beta egl-8 from Caenorhabditis elegans.